We begin with the raw amino-acid sequence, 283 residues long: Acetylglutamate kinase (283 aa).

Residues 63–64 (GG), arginine 85, and asparagine 178 each bind substrate.

Belongs to the acetylglutamate kinase family. ArgB subfamily.

The protein resides in the plastid. It is found in the chloroplast. It carries out the reaction N-acetyl-L-glutamate + ATP = N-acetyl-L-glutamyl 5-phosphate + ADP. Its pathway is amino-acid biosynthesis; L-arginine biosynthesis; N(2)-acetyl-L-ornithine from L-glutamate: step 2/4. Its function is as follows. Catalyzes the ATP-dependent phosphorylation of N-acetyl-L-glutamate. The protein is Acetylglutamate kinase of Porphyra purpurea (Red seaweed).